Here is a 357-residue protein sequence, read N- to C-terminus: Histidinol-phosphate aminotransferase (357 aa).

Lys-222 carries the N6-(pyridoxal phosphate)lysine modification.

Belongs to the class-II pyridoxal-phosphate-dependent aminotransferase family. Histidinol-phosphate aminotransferase subfamily. Homodimer. Pyridoxal 5'-phosphate serves as cofactor.

It carries out the reaction L-histidinol phosphate + 2-oxoglutarate = 3-(imidazol-4-yl)-2-oxopropyl phosphate + L-glutamate. It functions in the pathway amino-acid biosynthesis; L-histidine biosynthesis; L-histidine from 5-phospho-alpha-D-ribose 1-diphosphate: step 7/9. This is Histidinol-phosphate aminotransferase from Leuconostoc mesenteroides subsp. mesenteroides (strain ATCC 8293 / DSM 20343 / BCRC 11652 / CCM 1803 / JCM 6124 / NCDO 523 / NBRC 100496 / NCIMB 8023 / NCTC 12954 / NRRL B-1118 / 37Y).